We begin with the raw amino-acid sequence, 246 residues long: 2,3-bisphosphoglycerate-dependent phosphoglycerate mutase (246 aa).

Substrate contacts are provided by residues 9 to 16 (RHGQSAWN), 22 to 23 (TG), R61, 88 to 91 (ERHY), K99, 115 to 116 (RR), and 181 to 182 (GN). Catalysis depends on H10, which acts as the Tele-phosphohistidine intermediate. Catalysis depends on E88, which acts as the Proton donor/acceptor.

It belongs to the phosphoglycerate mutase family. BPG-dependent PGAM subfamily.

It catalyses the reaction (2R)-2-phosphoglycerate = (2R)-3-phosphoglycerate. Its pathway is carbohydrate degradation; glycolysis; pyruvate from D-glyceraldehyde 3-phosphate: step 3/5. Functionally, catalyzes the interconversion of 2-phosphoglycerate and 3-phosphoglycerate. The protein is 2,3-bisphosphoglycerate-dependent phosphoglycerate mutase of Bifidobacterium longum (strain DJO10A).